An 829-amino-acid polypeptide reads, in one-letter code: Cation/H(+) antiporter 14 (829 aa).

Transmembrane regions (helical) follow at residues 48–68, 77–97, 117–137, 145–165, 180–200, 215–235, 240–260, 281–301, 329–349, 361–383, 392–412, and 425–445; these read YAMPLMLLQMSVIIITSRLLY, GMISAQVLAGIILGPSLFGQS, SNLGFFIHLFLLGLRIDASII, ILIGTASYALPFSLGNLTVLF, ISTVISLNAMTSFPVTTTVLA, NCSIVCEAFSWIVALVFRMFL, LASVWSFVWVTALILVIFFVC, IPFFPIIMVLLTISLTSEVLG, LEMFATSLMLPCFISISGLQT, IIEAVILITYGCKFLGTAAASAY, FSLALLMCCQGVIEIYTCVMW, and LLIITLLLVTGISRFLVVCLY. At Ser-827 the chain carries Phosphoserine.

Belongs to the monovalent cation:proton antiporter 2 (CPA2) transporter (TC 2.A.37) family. CHX (TC 2.A.37.4) subfamily. As to expression, preferentially expressed in pollen but also detected in vegetative tissues like leaf trichomes and root vascular tissues.

Its subcellular location is the membrane. Functionally, may operate as a cation/H(+) antiporter. In Arabidopsis thaliana (Mouse-ear cress), this protein is Cation/H(+) antiporter 14 (CHX14).